The sequence spans 115 residues: Transcriptional regulator protein FixT (115 aa).

Interacts directly with FixL.

Prevents transcription of the intermediate key regulatory genes nifA and fixK by counteracting the activity of the FixLJ two-component system. Acts as an inhibitor of the sensor hemoprotein kinase fixL, preventing the production or the accumulation of its phosphorylated form. This Rhizobium meliloti (strain 1021) (Ensifer meliloti) protein is Transcriptional regulator protein FixT (fixT).